The following is a 197-amino-acid chain: GTP cyclohydrolase-2 (197 aa).

50–54 (RIHSE) is a binding site for GTP. Positions 55, 66, and 68 each coordinate Zn(2+). GTP is bound by residues glutamine 71, 93–95 (EGR), and threonine 115. Residue aspartate 127 is the Proton acceptor of the active site. Arginine 129 (nucleophile) is an active-site residue. The GTP site is built by threonine 150 and lysine 155.

The protein belongs to the GTP cyclohydrolase II family. The cofactor is Zn(2+).

The enzyme catalyses GTP + 4 H2O = 2,5-diamino-6-hydroxy-4-(5-phosphoribosylamino)-pyrimidine + formate + 2 phosphate + 3 H(+). The protein operates within cofactor biosynthesis; riboflavin biosynthesis; 5-amino-6-(D-ribitylamino)uracil from GTP: step 1/4. Functionally, catalyzes the conversion of GTP to 2,5-diamino-6-ribosylamino-4(3H)-pyrimidinone 5'-phosphate (DARP), formate and pyrophosphate. This chain is GTP cyclohydrolase-2, found in Neisseria gonorrhoeae (strain ATCC 700825 / FA 1090).